Reading from the N-terminus, the 132-residue chain is Large ribosomal subunit protein uL24 (132 aa).

This sequence belongs to the universal ribosomal protein uL24 family. Part of the 50S ribosomal subunit.

One of two assembly initiator proteins, it binds directly to the 5'-end of the 23S rRNA, where it nucleates assembly of the 50S subunit. Its function is as follows. Located at the polypeptide exit tunnel on the outside of the subunit. This is Large ribosomal subunit protein uL24 from Aeropyrum pernix (strain ATCC 700893 / DSM 11879 / JCM 9820 / NBRC 100138 / K1).